The following is a 338-amino-acid chain: MKRMIALDGAQGEGGGQILRSALSLSMITGQPFTITGIRAGRAKPGLLRQHLTAVKAAAEICRATVEGAELGSQRLVFRPGTVRGGDYRFAIGSAGSCTLVLQTVLPALWFADGPSRVEVSGGTDNPSAPPADFIRRVLEPLLAKIGVHQQTTLLRHGFYPAGGGVVATEVSPVASFNSLQLGERGNIVQMRGEVLLAGVPRHVAEREIATLAGSFSLHEQNIHNLPRDQGPGNTVSLEVESENITERFFVVGEKRVSAEVVAAQLVKEVKRYLASPAAVGEYLADQLVLPMALAGAGEFTVAHPSCHLQTNIAVVERFLPVRFSLIETDGVTRVSIE.

ATP is bound by residues Gln103 and 283 to 287; that span reads YLADQ. His308 (tele-AMP-histidine intermediate) is an active-site residue.

Belongs to the RNA 3'-terminal cyclase family. Type 1 subfamily.

The protein resides in the cytoplasm. The enzyme catalyses a 3'-end 3'-phospho-ribonucleotide-RNA + ATP = a 3'-end 2',3'-cyclophospho-ribonucleotide-RNA + AMP + diphosphate. Its function is as follows. Catalyzes the conversion of 3'-phosphate to a 2',3'-cyclic phosphodiester at the end of RNA. The mechanism of action of the enzyme occurs in 3 steps: (A) adenylation of the enzyme by ATP; (B) transfer of adenylate to an RNA-N3'P to produce RNA-N3'PP5'A; (C) and attack of the adjacent 2'-hydroxyl on the 3'-phosphorus in the diester linkage to produce the cyclic end product. The biological role of this enzyme is unknown but it is likely to function in some aspects of cellular RNA processing. In Escherichia coli O81 (strain ED1a), this protein is RNA 3'-terminal phosphate cyclase.